Reading from the N-terminus, the 185-residue chain is Ribosome-recycling factor (185 aa).

The interval 137-162 (DSIDKMVKDGEVGEDEGRRAEKELDD) is disordered.

It belongs to the RRF family.

Its subcellular location is the cytoplasm. In terms of biological role, responsible for the release of ribosomes from messenger RNA at the termination of protein biosynthesis. May increase the efficiency of translation by recycling ribosomes from one round of translation to another. The protein is Ribosome-recycling factor of Streptomyces coelicolor (strain ATCC BAA-471 / A3(2) / M145).